We begin with the raw amino-acid sequence, 168 residues long: MAATPSAPAKSEMIDLTKLSPEQLIQIKQEFEQEITNVQDSLSTLHGCQAKYAGSKEALGTFQPNWENRQILVPLTSSMYVPGRVKDLNRFVIDIGTGYYIEKDLEGSKDYFKRRVEYVQEQIEKIEKIHLQKTRFYNSVMSVLEMKQAAAAKLQSQQQSQPAVTQSS.

It belongs to the prefoldin subunit alpha family. In terms of assembly, heterohexamer of two PFD-alpha type and four PFD-beta type subunits.

In terms of biological role, binds specifically to cytosolic chaperonin (c-CPN) and transfers target proteins to it. Binds to nascent polypeptide chain and promotes folding in an environment in which there are many competing pathways for nonnative proteins. The polypeptide is Probable prefoldin subunit 5 (Drosophila melanogaster (Fruit fly)).